The sequence spans 284 residues: MRGARLMGALLALAGLLQGALALRMAAFNIRTFGETKMSNATLSKYIVQILSRYDVAVVQEVRDSHLTAVGKLLDTLNQDDPNAYHYVVSEPLGRSSYKERYLFLFRPDRVSVLDSYQYDDGCEPCGNDTFSREPAIVRFHSPLTEVKEFAVVPLHAAPLDAVAEIDALYDVYLDVQHKWDLEDIVLMGDFNAGCSYVAASQWSSIRLRTNPAFQWLIPDTADTTSTSTHCAYDRIVVAGSQLQHAVVPESAAPFNFQVAYGLSSQLAQAISDHYPVEVTLKRA.

The first 22 residues, 1-22 (MRGARLMGALLALAGLLQGALA), serve as a signal peptide directing secretion. N40 carries N-linked (GlcNAc...) asparagine glycosylation. E100 is an active-site residue. An intrachain disulfide couples C123 to C126. N-linked (GlcNAc...) asparagine glycosylation occurs at N128. Residue H156 is part of the active site. A disulfide bridge links C195 with C231.

It belongs to the DNase I family. Ca(2+) is required as a cofactor. The cofactor is Mg(2+). Highest expression in pancreas.

Its subcellular location is the secreted. It localises to the zymogen granule. It is found in the nucleus envelope. It catalyses the reaction Endonucleolytic cleavage to 5'-phosphodinucleotide and 5'-phosphooligonucleotide end-products.. Functionally, serum endocuclease secreted into body fluids by a wide variety of exocrine and endocrine organs. Expressed by non-hematopoietic tissues and preferentially cleaves protein-free DNA. Among other functions, seems to be involved in cell death by apoptosis. Binds specifically to G-actin and blocks actin polymerization. Together with DNASE1L3, plays a key role in degrading neutrophil extracellular traps (NETs). NETs are mainly composed of DNA fibers and are released by neutrophils to bind pathogens during inflammation. Degradation of intravascular NETs by DNASE1 and DNASE1L3 is required to prevent formation of clots that obstruct blood vessels and cause organ damage following inflammation. This Canis lupus familiaris (Dog) protein is Deoxyribonuclease-1 (DNASE1).